Consider the following 1037-residue polypeptide: Glycine dehydrogenase (decarboxylating) A, mitochondrial (1037 aa).

The N-terminal 66 residues, 1–66, are a transit peptide targeting the mitochondrion; that stretch reads MERARRLANK…LNGFGSQVRT (66 aa). Lysine 773 bears the N6-(pyridoxal phosphate)lysine mark.

It belongs to the GcvP family. In terms of assembly, homodimer. The glycine cleavage system is composed of four proteins: P, T, L and H. The cofactor is pyridoxal 5'-phosphate. Expressed in leaves, stems and roots.

Its subcellular location is the mitochondrion. It catalyses the reaction N(6)-[(R)-lipoyl]-L-lysyl-[glycine-cleavage complex H protein] + glycine + H(+) = N(6)-[(R)-S(8)-aminomethyldihydrolipoyl]-L-lysyl-[glycine-cleavage complex H protein] + CO2. Its function is as follows. The glycine cleavage system catalyzes the degradation of glycine. The P protein binds the alpha-amino group of glycine through its pyridoxal phosphate cofactor; CO(2) is released and the remaining methylamine moiety is then transferred to the lipoamide cofactor of the H protein. In Flaveria pringlei, this protein is Glycine dehydrogenase (decarboxylating) A, mitochondrial (GDCSPA).